Reading from the N-terminus, the 128-residue chain is Prokineticin-2 (128 aa).

The N-terminal stretch at 1-27 is a signal peptide; that stretch reads MRSSRCARLLLLLLLPPLLLTPPAGDA. Cystine bridges form between cysteine 34–cysteine 46, cysteine 40–cysteine 58, cysteine 45–cysteine 106, cysteine 68–cysteine 114, and cysteine 108–cysteine 124. Positions 71 to 95 are disordered; the sequence is MTRKNHFGNGRQERRKRKRRRKKKV. Over residues 83 to 95 the composition is skewed to basic residues; it reads ERRKRKRRRKKKV.

This sequence belongs to the AVIT (prokineticin) family.

It is found in the secreted. Functionally, may function as an output molecule from the suprachiasmatic nucleus (SCN) that transmits behavioral circadian rhythm. May also function locally within the SCN to synchronize output. Potently contracts gastrointestinal (GI) smooth muscle. The polypeptide is Prokineticin-2 (PROK2) (Bos taurus (Bovine)).